We begin with the raw amino-acid sequence, 407 residues long: Phosphopentomutase (407 aa).

Mn(2+) is bound by residues Asp10, Asp307, His312, Asp348, His349, and His360.

The protein belongs to the phosphopentomutase family. It depends on Mn(2+) as a cofactor.

Its subcellular location is the cytoplasm. It catalyses the reaction 2-deoxy-alpha-D-ribose 1-phosphate = 2-deoxy-D-ribose 5-phosphate. The enzyme catalyses alpha-D-ribose 1-phosphate = D-ribose 5-phosphate. It participates in carbohydrate degradation; 2-deoxy-D-ribose 1-phosphate degradation; D-glyceraldehyde 3-phosphate and acetaldehyde from 2-deoxy-alpha-D-ribose 1-phosphate: step 1/2. Functionally, isomerase that catalyzes the conversion of deoxy-ribose 1-phosphate (dRib-1-P) and ribose 1-phosphate (Rib-1-P) to deoxy-ribose 5-phosphate (dRib-5-P) and ribose 5-phosphate (Rib-5-P), respectively. The sequence is that of Phosphopentomutase from Methylobacterium nodulans (strain LMG 21967 / CNCM I-2342 / ORS 2060).